A 150-amino-acid polypeptide reads, in one-letter code: Ribonuclease HI (150 aa).

The region spanning 1–142 is the RNase H type-1 domain; it reads MSDSVELFTD…ADQLANRGVD (142 aa). Mg(2+)-binding residues include Asp10, Glu48, Asp70, and Asp134.

It belongs to the RNase H family. In terms of assembly, monomer. The cofactor is Mg(2+).

Its subcellular location is the cytoplasm. It carries out the reaction Endonucleolytic cleavage to 5'-phosphomonoester.. Its function is as follows. Endonuclease that specifically degrades the RNA of RNA-DNA hybrids. The sequence is that of Ribonuclease HI from Pseudomonas syringae pv. tomato (strain ATCC BAA-871 / DC3000).